Here is a 427-residue protein sequence, read N- to C-terminus: tRNA(Ile)-lysidine synthase (427 aa).

27 to 32 (SGGVDS) is a binding site for ATP.

It belongs to the tRNA(Ile)-lysidine synthase family.

The protein localises to the cytoplasm. The catalysed reaction is cytidine(34) in tRNA(Ile2) + L-lysine + ATP = lysidine(34) in tRNA(Ile2) + AMP + diphosphate + H(+). Ligates lysine onto the cytidine present at position 34 of the AUA codon-specific tRNA(Ile) that contains the anticodon CAU, in an ATP-dependent manner. Cytidine is converted to lysidine, thus changing the amino acid specificity of the tRNA from methionine to isoleucine. The protein is tRNA(Ile)-lysidine synthase of Streptococcus equi subsp. equi (strain 4047).